The following is a 710-amino-acid chain: uncharacterized protein (710 aa).

2 coiled-coil regions span residues 273 to 298 and 477 to 528; these read LYRQERKELKNTKQRYLKKKNEMEEG and RYEK…VADT.

This is an uncharacterized protein from Coxiella burnetii (strain RSA 493 / Nine Mile phase I).